A 122-amino-acid polypeptide reads, in one-letter code: Chorismate mutase AroH (122 aa).

The region spanning 2–120 is the Chorismate mutase aroH-type domain; it reads VRGIRGAITV…AVRLRPDLES (119 aa). Positions 6, 89, and 107 each coordinate prephenate.

Homotrimer.

The protein localises to the cytoplasm. It carries out the reaction chorismate = prephenate. It functions in the pathway metabolic intermediate biosynthesis; prephenate biosynthesis; prephenate from chorismate: step 1/1. Its activity is regulated as follows. Inhibited by 40% with 500 uM tyrosine, and a tyrosine concentration as high as 5 mM reduced activity to 5%. Functionally, catalyzes the Claisen rearrangement of chorismate to prephenate. Probably involved in the aromatic amino acid biosynthesis. This Thermus thermophilus protein is Chorismate mutase AroH.